Here is a 436-residue protein sequence, read N- to C-terminus: Xylose isomerase (436 aa).

Catalysis depends on residues His100 and Asp103. Residues Glu231, Glu267, His270, Asp295, Asp306, Asp308, and Asp338 each coordinate Mg(2+).

It belongs to the xylose isomerase family. As to quaternary structure, homotetramer. The cofactor is Mg(2+).

Its subcellular location is the cytoplasm. The catalysed reaction is alpha-D-xylose = alpha-D-xylulofuranose. This is Xylose isomerase from Rhizobium etli (strain CIAT 652).